The following is a 414-amino-acid chain: Imidazolonepropionase (414 aa).

Fe(3+) is bound by residues H77 and H79. Positions 77 and 79 each coordinate Zn(2+). Residues R86, Y149, and H184 each coordinate 4-imidazolone-5-propanoate. N-formimidoyl-L-glutamate is bound at residue Y149. H249 provides a ligand contact to Fe(3+). A Zn(2+)-binding site is contributed by H249. E252 lines the 4-imidazolone-5-propanoate pocket. D323 lines the Fe(3+) pocket. D323 is a Zn(2+) binding site. N-formimidoyl-L-glutamate contacts are provided by N325 and G327. Residue S328 coordinates 4-imidazolone-5-propanoate.

The protein belongs to the metallo-dependent hydrolases superfamily. HutI family. Zn(2+) is required as a cofactor. It depends on Fe(3+) as a cofactor.

It localises to the cytoplasm. It catalyses the reaction 4-imidazolone-5-propanoate + H2O = N-formimidoyl-L-glutamate. The protein operates within amino-acid degradation; L-histidine degradation into L-glutamate; N-formimidoyl-L-glutamate from L-histidine: step 3/3. In terms of biological role, catalyzes the hydrolytic cleavage of the carbon-nitrogen bond in imidazolone-5-propanoate to yield N-formimidoyl-L-glutamate. It is the third step in the universal histidine degradation pathway. The chain is Imidazolonepropionase from Phocaeicola vulgatus (strain ATCC 8482 / DSM 1447 / JCM 5826 / CCUG 4940 / NBRC 14291 / NCTC 11154) (Bacteroides vulgatus).